A 584-amino-acid polypeptide reads, in one-letter code: Probable lysosomal cobalamin transporter (584 aa).

The next 10 helical transmembrane spans lie at 8-28 (LIWI…STFV), 46-66 (IFTL…VALV), 93-113 (TVVY…IVPF), 144-164 (TLVF…VPVA), 189-209 (ALTF…VIYS), 313-333 (LLGG…MLLT), 350-370 (ILGK…AASV), 376-396 (VIFI…IATI), 421-441 (ATVM…MIVV), and 509-529 (GIVD…VLLI).

This sequence belongs to the LIMR family. LMBRD1 subfamily.

It localises to the lysosome membrane. Functionally, probable lysosomal cobalamin transporter. Required to export cobalamin from lysosomes allowing its conversion to cofactors. In Coccidioides immitis (strain RS) (Valley fever fungus), this protein is Probable lysosomal cobalamin transporter.